The primary structure comprises 131 residues: Leptin receptor gene-related protein (131 aa).

A run of 4 helical transmembrane segments spans residues 7 to 27 (LVAL…GCAL), 32 to 52 (VYWP…YFIA), 69 to 89 (LAYF…VVLA), and 100 to 120 (GLVL…FLVF).

This sequence belongs to the OB-RGRP/VPS55 family. In terms of assembly, interacts with LEPR. Interacts with RAB13. Widely distributed in the brain, with elevated expression in the hypothalamic regions, including the paraventricular nucleus. In the placenta, present at high levels in the junctional zone situated towards the maternal aspect and throughout the labyrinth zone in close proximity to the developing fetus.

The protein localises to the golgi apparatus membrane. The protein resides in the endosome membrane. In terms of biological role, negatively regulates leptin receptor (LEPR) cell surface expression, and thus decreases response to leptin. Negatively regulates growth hormone (GH) receptor cell surface expression in liver. May play a role in liver resistance to GH during periods of reduced nutrient availability. The sequence is that of Leptin receptor gene-related protein (Leprot) from Mus musculus (Mouse).